We begin with the raw amino-acid sequence, 196 residues long: Late protein I196L (196 aa).

Repeat copies occupy residues Ser-28–Ser-48 and Ser-49–Ser-70. A 3; approximate repeat occupies Ser-71 to Ser-92.

It belongs to the asfivirus I196L family.

The sequence is that of Late protein I196L from African swine fever virus (strain Badajoz 1971 Vero-adapted) (Ba71V).